A 427-amino-acid chain; its full sequence is 3-phosphoshikimate 1-carboxyvinyltransferase (427 aa).

3-phosphoshikimate-binding residues include Lys23, Ser24, and Arg28. Lys23 contributes to the phosphoenolpyruvate binding site. Phosphoenolpyruvate contacts are provided by Gly97 and Arg125. Ser170, Ser171, Gln172, Ser198, Asp314, Asn337, and Lys341 together coordinate 3-phosphoshikimate. Gln172 serves as a coordination point for phosphoenolpyruvate. The active-site Proton acceptor is the Asp314. Arg345, Arg387, and Lys412 together coordinate phosphoenolpyruvate.

Belongs to the EPSP synthase family. As to quaternary structure, monomer.

Its subcellular location is the cytoplasm. It carries out the reaction 3-phosphoshikimate + phosphoenolpyruvate = 5-O-(1-carboxyvinyl)-3-phosphoshikimate + phosphate. It participates in metabolic intermediate biosynthesis; chorismate biosynthesis; chorismate from D-erythrose 4-phosphate and phosphoenolpyruvate: step 6/7. Functionally, catalyzes the transfer of the enolpyruvyl moiety of phosphoenolpyruvate (PEP) to the 5-hydroxyl of shikimate-3-phosphate (S3P) to produce enolpyruvyl shikimate-3-phosphate and inorganic phosphate. This Buchnera aphidicola subsp. Acyrthosiphon pisum (strain Tuc7) protein is 3-phosphoshikimate 1-carboxyvinyltransferase.